A 119-amino-acid chain; its full sequence is Flagellar transcriptional regulator FlhD (119 aa).

This sequence belongs to the FlhD family. As to quaternary structure, homodimer; disulfide-linked. Forms a heterohexamer composed of two FlhC and four FlhD subunits. Each FlhC binds a FlhD dimer, forming a heterotrimer, and a hexamer assembles by dimerization of two heterotrimers.

The protein resides in the cytoplasm. Functionally, functions in complex with FlhC as a master transcriptional regulator that regulates transcription of several flagellar and non-flagellar operons by binding to their promoter region. Activates expression of class 2 flagellar genes, including fliA, which is a flagellum-specific sigma factor that turns on the class 3 genes. Also regulates genes whose products function in a variety of physiological pathways. The sequence is that of Flagellar transcriptional regulator FlhD from Pectobacterium atrosepticum (strain SCRI 1043 / ATCC BAA-672) (Erwinia carotovora subsp. atroseptica).